Here is a 227-residue protein sequence, read N- to C-terminus: Eukaryotic translation initiation factor 4E-1 (227 aa).

Residues 1–52 (MAEEHETRPPSAGRPPSSGRGRADDADEREEGEIADDDSGHAPPQANPAAPH) are disordered. Positions 9-20 (PPSAGRPPSSGR) are enriched in low complexity. Residues 25-37 (DADEREEGEIADD) show a composition bias toward acidic residues. EIF4G-binding stretches follow at residues 52 to 55 (HPLE) and 62 to 98 (FDNPQGKSKQATWGSSIRPIHTFSTVEDFWSLYNNIH). MRNA-binding positions include 70-75 (KQATWG), Lys102, and 120-121 (WE). Cysteines 125 and 163 form a disulfide. Positions 146–155 (HTLLAMIGEQ) are EIF4G-binding. Residues 170–175 (RGKQER) and 215–219 (KKMDK) each bind mRNA.

The protein belongs to the eukaryotic initiation factor 4E family. EIF4F is a multi-subunit complex, the composition of which varies with external and internal environmental conditions. It is composed of at least EIF4A, EIF4E and EIF4G. EIF4E is also known to interact with other partners. In higher plants two isoforms of EIF4F have been identified, named isoform EIF4F and isoform EIF(iso)4F. Isoform EIF4F has subunits p220 and p26, whereas isoform EIF(iso)4F has subunits p82 and p28. Post-translationally, according to the redox status, the Cys-125-Cys-163 disulfide bridge may have a role in regulating protein function by affecting its ability to bind capped mRNA.

Its subcellular location is the nucleus. It localises to the cytoplasm. Component of the protein complex eIF4F, which is involved in the recognition of the mRNA cap, ATP-dependent unwinding of 5'-terminal secondary structure and recruitment of mRNA to the ribosome. Recognizes and binds the 7-methylguanosine-containing mRNA cap during an early step in the initiation of protein synthesis and facilitates ribosome binding by inducing the unwinding of the mRNAs secondary structures. This is Eukaryotic translation initiation factor 4E-1 from Oryza sativa subsp. japonica (Rice).